We begin with the raw amino-acid sequence, 604 residues long: Sulfite reductase [NADPH] flavoprotein alpha-component (604 aa).

The 139-residue stretch at 66 to 204 folds into the Flavodoxin-like domain; sequence VTVLSASQTG…AADGWTDNIA (139 aa). FMN-binding positions include 72–77, 119–122, and 155–164; these read SQTGNA, STQG, and LGDSSYPNFC. The region spanning 239-453 is the FAD-binding FR-type domain; sequence ADPFPAALLA…VERNDGFRLP (215 aa). Residues threonine 327, glutamine 361, 391–394, 409–411, and 424–427 contribute to the FAD site; these read RLYS, TVG, and GGAS. NADP(+) contacts are provided by residues 524–525, 530–534, and aspartate 566; these read SR and KIYVQ. Tyrosine 604 is an FAD binding site.

This sequence belongs to the NADPH-dependent sulphite reductase flavoprotein subunit CysJ family. The protein in the N-terminal section; belongs to the flavodoxin family. In the C-terminal section; belongs to the flavoprotein pyridine nucleotide cytochrome reductase family. Alpha(8)-beta(8). The alpha component is a flavoprotein, the beta component is a hemoprotein. The cofactor is FAD. Requires FMN as cofactor.

It catalyses the reaction hydrogen sulfide + 3 NADP(+) + 3 H2O = sulfite + 3 NADPH + 4 H(+). Its pathway is sulfur metabolism; hydrogen sulfide biosynthesis; hydrogen sulfide from sulfite (NADPH route): step 1/1. Component of the sulfite reductase complex that catalyzes the 6-electron reduction of sulfite to sulfide. This is one of several activities required for the biosynthesis of L-cysteine from sulfate. The flavoprotein component catalyzes the electron flow from NADPH -&gt; FAD -&gt; FMN to the hemoprotein component. The polypeptide is Sulfite reductase [NADPH] flavoprotein alpha-component (Neisseria meningitidis serogroup A / serotype 4A (strain DSM 15465 / Z2491)).